Here is a 138-residue protein sequence, read N- to C-terminus: Putative pre-16S rRNA nuclease (138 aa).

Belongs to the YqgF nuclease family.

The protein localises to the cytoplasm. Functionally, could be a nuclease involved in processing of the 5'-end of pre-16S rRNA. The chain is Putative pre-16S rRNA nuclease from Karelsulcia muelleri (strain GWSS) (Sulcia muelleri).